The sequence spans 550 residues: MTPADLADLLRTTATAVLTERDLDTAALPATVTVERPRNPEHGDYATNLALQVGKKVGVNPRELAGWLAEALTAAAGIASAEVAGPGFVNLRIEAAAQNVIVGDIITSAERYGHSAALAERNINLEFVSANPTGPIHIGGTRWAAVGDALGRLLATQGAAVVREYYFNDHGAQIDRFVSSLIAAAKGEPTPEDGYAGSYIGDIAAQVLAKDPGALELPDGEMRETFRAIGVDLMFDHIKISLHDFGTDFDVFTHEDSMHTSGRVEEAIARLRENGAIYEKDGATWLRTTDFGDDKDRVVIKSDGAPAYIAGDLAYFLDKRQRGFDLCIYMLGADHHGYIARLKAAAAALGDDPDTVEVMIGQMVNLVRDGQPVRMSKRAGTVITLDDLVEAIGVDAARYSLIRSSVDTPIDIDLALWSSASNENPVYYVQYAHARLSALARNAADLGVVADTARLDLLTHDKEGTLIRNLGEFPRVLESAAALREPHRVCRYLEDLAGDYHRFYDSCRVLPQGDEAPGSLHQARLALCQATRQVIANGLAILGVSAPERM.

The short motif at 130-140 (ANPTGPIHIGG) is the 'HIGH' region element.

This sequence belongs to the class-I aminoacyl-tRNA synthetase family. Monomer.

It is found in the cytoplasm. The catalysed reaction is tRNA(Arg) + L-arginine + ATP = L-arginyl-tRNA(Arg) + AMP + diphosphate. This chain is Arginine--tRNA ligase, found in Mycobacterium sp. (strain JLS).